The following is a 235-amino-acid chain: Type III pantothenate kinase (235 aa).

An ATP-binding site is contributed by 6–13; the sequence is DVGNNYIK. Residues Y81 and 88–91 contribute to the substrate site; that span reads GTDR. D90 functions as the Proton acceptor in the catalytic mechanism. Residue D111 coordinates K(+). T114 contributes to the ATP binding site. T166 provides a ligand contact to substrate.

The protein belongs to the type III pantothenate kinase family. As to quaternary structure, homodimer. It depends on NH4(+) as a cofactor. K(+) is required as a cofactor.

It localises to the cytoplasm. The catalysed reaction is (R)-pantothenate + ATP = (R)-4'-phosphopantothenate + ADP + H(+). Its pathway is cofactor biosynthesis; coenzyme A biosynthesis; CoA from (R)-pantothenate: step 1/5. In terms of biological role, catalyzes the phosphorylation of pantothenate (Pan), the first step in CoA biosynthesis. This is Type III pantothenate kinase from Cytophaga hutchinsonii (strain ATCC 33406 / DSM 1761 / CIP 103989 / NBRC 15051 / NCIMB 9469 / D465).